A 93-amino-acid chain; its full sequence is Em protein H2 (93 aa).

Residues 1 to 93 form a disordered region; the sequence is MASGQQERSQ…IDESKFKTKS (93 aa). 3 stretches are compositionally biased toward basic and acidic residues: residues 9–19, 31–52, and 73–93; these read SQLDRKAREGE, LEAH…REQM, and GGER…KTKS.

This sequence belongs to the small hydrophilic plant seed protein family.

Its function is as follows. It is thought to provide protection for the cytoplasm during the desiccation stage of embryo development. This chain is Em protein H2 (EMH2), found in Triticum aestivum (Wheat).